We begin with the raw amino-acid sequence, 767 residues long: Protein NLP3 (767 aa).

Disordered regions lie at residues 462-494, 590-622, and 646-672; these read ATPP…RKTK, INPT…CSSE, and HEDQ…KAKD. One can recognise an RWP-RK domain in the interval 482–566; the sequence is SASSLENRKR…MDSVEGVQGS (85 aa). Residues 485–506 adopt a coiled-coil conformation; it reads SLENRKRKTKAEKDITLDTLRQ. Composition is skewed to low complexity over residues 604 to 622 and 655 to 667; these read PSSS…CSSE and TSSL…ATTP. The region spanning 673–759 is the PB1 domain; sequence GMKVKAMFGD…ETIRILVHHP (87 aa).

It is found in the nucleus. Probable transcription factor. The protein is Protein NLP3 (NLP3) of Arabidopsis thaliana (Mouse-ear cress).